The primary structure comprises 887 residues: Pre-mRNA-splicing factor cwf22 (887 aa).

The tract at residues 1 to 27 (MEKEDKSFGIGMLDYNRENPESSGHSR) is disordered. In terms of domain architecture, MIF4G spans 124 to 307 (KKSINGLINK…EVLFQTRKDK (184 aa)). The segment at 366-401 (ILGEEDDDENEEDEEDSEETSESEEDESVNDEKPQV) is disordered. Over residues 368 to 394 (GEEDDDENEEDEEDSEETSESEEDESV) the composition is skewed to acidic residues. The 117-residue stretch at 411-527 (NLRKSIYLTI…GWEVYDCVRL (117 aa)) folds into the MI domain. 2 disordered regions span residues 607–834 (MPKS…KTYH) and 867–887 (GELY…PRAD). Positions 618–662 (EGYSSGSETGSTYSSSYSSTYSRGRSYSRSTRSYSKSRSYSRSRS) are enriched in low complexity. Ser662 is modified (phosphoserine). At Thr664 the chain carries Phosphothreonine. Basic and acidic residues predominate over residues 677-690 (KDRELSPRGRERSS). Over residues 691 to 712 (NRNSYSDLSRSSSLSRGRSRSY) the composition is skewed to low complexity. The segment covering 717-726 (RLIESEDKGY) has biased composition (basic and acidic residues). Residues 736–746 (RKYRSRQRYRR) show a composition bias toward basic residues. Composition is skewed to low complexity over residues 747 to 762 (SYAG…SRSP) and 769 to 791 (SMSC…SRSP). A compositionally biased stretch (polar residues) spans 799-809 (DSLSYNRQYSP).

It belongs to the CWC22 family. As to quaternary structure, belongs to the 40S cdc5-associated complex (or cwf complex), a spliceosome sub-complex reminiscent of a late-stage spliceosome composed of the U2, U5 and U6 snRNAs and at least brr2, cdc5, cwf2/prp3, cwf3/syf1, cwf4/syf3, cwf5/ecm2, spp42/cwf6, cwf7/spf27, cwf8, cwf9, cwf10, cwf11, cwf12, prp45/cwf13, cwf14, cwf15, cwf16, cwf17, cwf18, cwf19, cwf20, cwf21, cwf22, cwf23, cwf24, cwf25, cwf26, cyp7/cwf27, cwf28, cwf29/ist3, lea1, msl1, prp5/cwf1, prp10, prp12/sap130, prp17, prp22, sap61, sap62, sap114, sap145, slu7, smb1, smd1, smd3, smf1, smg1 and syf2.

The protein localises to the cytoplasm. The protein resides in the nucleus. Functionally, may be involved in pre-mRNA splicing. The sequence is that of Pre-mRNA-splicing factor cwf22 (cwf22) from Schizosaccharomyces pombe (strain 972 / ATCC 24843) (Fission yeast).